A 365-amino-acid chain; its full sequence is MSCQAFSADSFTTLAGDSLPLLMHHASAADCLPSSASTHTHNMVSAVPSGLSLLQSSKRSHMHLSTSTLGNGPPGLHYPVTPCHYSNQQTTYGMMAAQEMLSASISQTRILQTCSVPHPNMVNGANTLQGSLAPCLYKFPEHGLGGGSCSLSHSFPPLPPAVLSEEPPLGGTKDLRLRSRPPDDPPDMDSPQIRELEKFANNFKLRRIKLGYTQTNVGEALAAVHGSEFSQTTICRFENLQLSFKNACTLKAILAKWLDEAEQAGALFNEKMGMNERKRKRRTTISLGAKEALERSFREKIKPSSQEIVRMAEGLHLEKEVVRVWFCNRRQREKRVKTSLHHSSYLTKDSPTYRYPYLSPNAIKP.

The 9aaTAD motif lies at 5-12; that stretch reads AFSADSFT. The interval 160–191 is disordered; that stretch reads PAVLSEEPPLGGTKDLRLRSRPPDDPPDMDSP. Positions 173 to 183 are enriched in basic and acidic residues; the sequence is KDLRLRSRPPD. A POU-specific domain is found at 188 to 262; sequence MDSPQIRELE…ILAKWLDEAE (75 aa). The homeobox DNA-binding region spans 278–337; the sequence is KRKRRTTISLGAKEALERSFREKIKPSSQEIVRMAEGLHLEKEVVRVWFCNRRQREKRVK.

Belongs to the POU transcription factor family. Class-1 subfamily.

The protein localises to the nucleus. Its function is as follows. Transcription factor that activates growth hormone and prolactin genes. Specifically binds to the consensus sequence 5'-TAAAT-3'. This Oncorhynchus keta (Chum salmon) protein is Pituitary-specific positive transcription factor 1 (pou1f1).